A 249-amino-acid chain; its full sequence is Globin-like protein 9 (249 aa).

The disordered stretch occupies residues 20–43; it reads TNKGPNGLARRGTQRGCSRSKSTR. Residues 52–205 enclose the Globin domain; sequence SLTFSQKQAL…LIDELRGGFE (154 aa). Residues His116 and His148 each coordinate heme.

The protein belongs to the globin family.

This chain is Globin-like protein 9 (glb-9), found in Caenorhabditis elegans.